The following is a 396-amino-acid chain: Beta-peptidyl aminopeptidase BapA (396 aa).

Residues 1-21 (MHYLKFPAIIAGMLLAGAASA) form the signal peptide. The Nucleophile role is filled by Ser-271. Catalysis depends on proton donor/acceptor residues Ser-309 and Asp-311.

It belongs to the peptidase S58 family. As to quaternary structure, heterooctamer of 4 heterodimers ((alpha:beta)4); each heterodimer is composed of an alpha subunit and a beta subunit processed from the same precursor. Autoproteolytic processing to generate the alpha and beta subunit is required for self-activation and is proposed to use a similar mechanism as substrate cleavage.

Its subcellular location is the periplasm. It carries out the reaction Cleaves N-terminal beta-homoamino acids from peptides composed of 2 to 6 amino acids.. Its activity is regulated as follows. Inhibited by AEBSF (4-(2-aminoethyl)benzenesulfonyl fluoride, Pefabloc SC). Its function is as follows. Beta-aminopeptidase that can cleave synthetic beta-peptides which consist of backbone-elongated beta-amino acid residues that are not processed by common proteolytic enzymes. Can cleave the beta-peptides beta-homoVal-beta-homoAla-beta-homoLeu and beta-homoAla-beta-homoLeu. Requires a beta-amino acid at the N-terminus of peptide substrates and cleaves the peptide bond between the N-terminal beta-amino acid and the amino acid at the second position of tripeptidic substrates of the general structure H-betahXaa-Ile-betahTyr-OH according to the following preferences with regard to the side chain of the N-terminal beta-amino acid: aliphatic and aromatic &gt; OH-containing &gt; hydrogen, basic and polar. beta-homoVal-beta-homoAla-beta-homoLeu and beta-homoAla-beta-homoLeu. The polypeptide is Beta-peptidyl aminopeptidase BapA (Sphingosinicella microcystinivorans).